The following is a 139-amino-acid chain: Membrane protein YqfB (139 aa).

A helical transmembrane segment spans residues 3–23 (DLLTNPLIIAAIIGIISAIFG). A disordered region spans residues 25-87 (KSKEEKQNSQ…TARNLKGLER (63 aa)). Positions 62 to 97 (NRMEQARREAEERRRETARNLKGLERDLAAAKQKTV) form a coiled coil. The segment covering 65-87 (EQARREAEERRRETARNLKGLER) has biased composition (basic and acidic residues).

The protein localises to the cell membrane. The protein is Membrane protein YqfB (yqfB) of Bacillus subtilis (strain 168).